The sequence spans 169 residues: MANVNIQAGAGEGLQEKLVAVRRVSKVVKGGRQFGFTALTVVGDGNGRVGFGLSKAREVPVAIQKSMEQARKNMRKVALNGQTLHHPVTAAAGAAKVHMQPASEGTGIIAGGAMRAVFEVVGVHNVLAKCIGTNNPINVVRATIKGLTALRDPKSVAAKRGMTVEELLG.

Residues 14-77 form the S5 DRBM domain; that stretch reads LQEKLVAVRR…EQARKNMRKV (64 aa).

It belongs to the universal ribosomal protein uS5 family. Part of the 30S ribosomal subunit. Contacts proteins S4 and S8.

Functionally, with S4 and S12 plays an important role in translational accuracy. Located at the back of the 30S subunit body where it stabilizes the conformation of the head with respect to the body. The protein is Small ribosomal subunit protein uS5 of Methylococcus capsulatus (strain ATCC 33009 / NCIMB 11132 / Bath).